The primary structure comprises 426 residues: MEQSNIDLEGALRALCQRARTAARALAPLDRAQKDRALRAIAERLRAEAGEGKRSAVLAANAEDVAAARAAGVSEALVDRLVLDEARLAAIAGAVLEIAAASDPVGQVVGMERRPNGLLVGQVRVPLGVIAMIYESRPNVTVDAAVLCLKSGNAAILRGGKEAARSNAALGELISDALRSVGLPADAVQMVPSLDREATRILLGLTGMIDLAIPRGGEGLIRFVAENARVPVIQHYKGVNHLYADAGCDLEMACRLVENGKLQRPGVCNALECLLVHEDVAAPLLGRVAALSERGLELRGDAATCALVPSARKAAEDDYGREFLAPILAVRVVRSLDEAIEHIGRYGSMHTEVICTPRYDHAQRFLREVDASCVLVNASSRFNDGGELGLGAEIGISTTKLHAYGPMGLASLTTLKWIAYGEGQTR.

Belongs to the gamma-glutamyl phosphate reductase family.

The protein localises to the cytoplasm. The catalysed reaction is L-glutamate 5-semialdehyde + phosphate + NADP(+) = L-glutamyl 5-phosphate + NADPH + H(+). The protein operates within amino-acid biosynthesis; L-proline biosynthesis; L-glutamate 5-semialdehyde from L-glutamate: step 2/2. Catalyzes the NADPH-dependent reduction of L-glutamate 5-phosphate into L-glutamate 5-semialdehyde and phosphate. The product spontaneously undergoes cyclization to form 1-pyrroline-5-carboxylate. The chain is Gamma-glutamyl phosphate reductase from Sorangium cellulosum (strain So ce56) (Polyangium cellulosum (strain So ce56)).